Consider the following 367-residue polypeptide: Phthiodiolone/phenolphthiodiolone dimycocerosates ketoreductase (367 aa).

It belongs to the mer family. Phthiodiolone/phenolphthiodiolone dimycocerosates ketoreductase subfamily.

Catalyzes the reduction of the keto moiety of phthiodiolone dimycocerosates (DIM B) and glycosylated phenolphthiodiolone dimycocerosates to form the intermediate compounds phthiotriol and glycosylated phenolphthiotriol dimycocerosates during phthiocerol dimycocerosates (DIM A) and glycosylated phenolphthiocerol dimycocerosates (PGL) biosynthesis. This chain is Phthiodiolone/phenolphthiodiolone dimycocerosates ketoreductase, found in Mycobacterium kansasii.